The sequence spans 155 residues: Small ribosomal subunit protein uS7 (155 aa).

Belongs to the universal ribosomal protein uS7 family. In terms of assembly, part of the 30S ribosomal subunit. Contacts proteins S9 and S11.

Functionally, one of the primary rRNA binding proteins, it binds directly to 16S rRNA where it nucleates assembly of the head domain of the 30S subunit. Is located at the subunit interface close to the decoding center, probably blocks exit of the E-site tRNA. The chain is Small ribosomal subunit protein uS7 from Chlorobium phaeovibrioides (strain DSM 265 / 1930) (Prosthecochloris vibrioformis (strain DSM 265)).